The primary structure comprises 350 residues: Glycosyltransferase 8 domain-containing protein 2 (350 aa).

At 1 to 6 the chain is on the cytoplasmic side; that stretch reads MALLRK. Residues 7-24 form a helical; Signal-anchor for type II membrane protein membrane-spanning segment; it reads INQVLLFLLIVTLCGILY. The Lumenal portion of the chain corresponds to 25–349; the sequence is KKVHKGTMLR…AGIFKLHHPN (325 aa). N-linked (GlcNAc...) asparagine glycosylation occurs at N234.

This sequence belongs to the glycosyltransferase 8 family.

It localises to the membrane. The chain is Glycosyltransferase 8 domain-containing protein 2 (GLT8D2) from Bos taurus (Bovine).